Reading from the N-terminus, the 219-residue chain is Ribonuclease T (219 aa).

The Exonuclease domain maps to Val20 to Phe194. Residues Asp23, Glu25, His181, and Asp186 each contribute to the Mg(2+) site. His181 functions as the Proton donor/acceptor in the catalytic mechanism.

This sequence belongs to the RNase T family. In terms of assembly, homodimer. Mg(2+) serves as cofactor.

Functionally, trims short 3' overhangs of a variety of RNA species, leaving a one or two nucleotide 3' overhang. Responsible for the end-turnover of tRNA: specifically removes the terminal AMP residue from uncharged tRNA (tRNA-C-C-A). Also appears to be involved in tRNA biosynthesis. The chain is Ribonuclease T from Buchnera aphidicola subsp. Schizaphis graminum (strain Sg).